We begin with the raw amino-acid sequence, 169 residues long: Lipoprotein signal peptidase (169 aa).

4 helical membrane passes run 4-24 (PICS…IVDL), 42-62 (LIPF…SFLA), 70-90 (WFFA…MYRS), and 102-122 (ALII…GAVI). Residues Asp-123 and Asp-141 contribute to the active site. A helical transmembrane segment spans residues 137 to 157 (FNIADTAICIGAALVIFEGFI).

Belongs to the peptidase A8 family.

It is found in the cell inner membrane. The enzyme catalyses Release of signal peptides from bacterial membrane prolipoproteins. Hydrolyzes -Xaa-Yaa-Zaa-|-(S,diacylglyceryl)Cys-, in which Xaa is hydrophobic (preferably Leu), and Yaa (Ala or Ser) and Zaa (Gly or Ala) have small, neutral side chains.. The protein operates within protein modification; lipoprotein biosynthesis (signal peptide cleavage). Its function is as follows. This protein specifically catalyzes the removal of signal peptides from prolipoproteins. The sequence is that of Lipoprotein signal peptidase from Yersinia enterocolitica serotype O:8 / biotype 1B (strain NCTC 13174 / 8081).